Consider the following 367-residue polypeptide: tRNA-specific 2-thiouridylase MnmA (367 aa).

ATP is bound by residues 12–19 and Met-38; that span reads GMSGGVDS. The segment at 98–100 is interaction with target base in tRNA; the sequence is NPD. Cys-103 acts as the Nucleophile in catalysis. A disulfide bond links Cys-103 and Cys-200. Gly-128 is an ATP binding site. The segment at 150–152 is interaction with tRNA; that stretch reads KDQ. Cys-200 functions as the Cysteine persulfide intermediate in the catalytic mechanism. The segment at 312-313 is interaction with tRNA; that stretch reads RY.

It belongs to the MnmA/TRMU family.

It localises to the cytoplasm. The enzyme catalyses S-sulfanyl-L-cysteinyl-[protein] + uridine(34) in tRNA + AH2 + ATP = 2-thiouridine(34) in tRNA + L-cysteinyl-[protein] + A + AMP + diphosphate + H(+). In terms of biological role, catalyzes the 2-thiolation of uridine at the wobble position (U34) of tRNA, leading to the formation of s(2)U34. This chain is tRNA-specific 2-thiouridylase MnmA, found in Psychromonas ingrahamii (strain DSM 17664 / CCUG 51855 / 37).